A 142-amino-acid polypeptide reads, in one-letter code: HTH-type transcriptional regulator MntR (142 aa).

The 63-residue stretch at 1-63 folds into the HTH dtxR-type domain; that stretch reads MPTPSMEDYI…YEKYRGLVLT (63 aa). Mn(2+) contacts are provided by Asp8, Glu11, His77, Glu99, Glu102, and His103.

It belongs to the DtxR/MntR family. Homodimer.

It localises to the cytoplasm. With respect to regulation, DNA binding is strongly activated by Mn(2+). Functionally, central regulator of manganese homeostasis. In Bacillus cereus (strain AH820), this protein is HTH-type transcriptional regulator MntR.